The primary structure comprises 94 residues: Aspartyl/glutamyl-tRNA(Asn/Gln) amidotransferase subunit C (94 aa).

The protein belongs to the GatC family. Heterotrimer of A, B and C subunits.

The catalysed reaction is L-glutamyl-tRNA(Gln) + L-glutamine + ATP + H2O = L-glutaminyl-tRNA(Gln) + L-glutamate + ADP + phosphate + H(+). It carries out the reaction L-aspartyl-tRNA(Asn) + L-glutamine + ATP + H2O = L-asparaginyl-tRNA(Asn) + L-glutamate + ADP + phosphate + 2 H(+). In terms of biological role, allows the formation of correctly charged Asn-tRNA(Asn) or Gln-tRNA(Gln) through the transamidation of misacylated Asp-tRNA(Asn) or Glu-tRNA(Gln) in organisms which lack either or both of asparaginyl-tRNA or glutaminyl-tRNA synthetases. The reaction takes place in the presence of glutamine and ATP through an activated phospho-Asp-tRNA(Asn) or phospho-Glu-tRNA(Gln). This is Aspartyl/glutamyl-tRNA(Asn/Gln) amidotransferase subunit C from Campylobacter jejuni subsp. jejuni serotype O:6 (strain 81116 / NCTC 11828).